A 547-amino-acid polypeptide reads, in one-letter code: Chaperonin GroEL 1 (547 aa).

Residues 30–33, lysine 51, 87–91, glycine 415, 479–481, and aspartate 495 contribute to the ATP site; these read TLGP, DGTTT, and NAA. The interval 525 to 547 is disordered; the sequence is PKKKGAPAGGGMGGMGGMDEMDY. The segment covering 531 to 541 has biased composition (gly residues); that stretch reads PAGGGMGGMGG.

The protein belongs to the chaperonin (HSP60) family. In terms of assembly, forms a cylinder of 14 subunits composed of two heptameric rings stacked back-to-back. Interacts with the co-chaperonin GroES.

It localises to the cytoplasm. The enzyme catalyses ATP + H2O + a folded polypeptide = ADP + phosphate + an unfolded polypeptide.. In terms of biological role, together with its co-chaperonin GroES, plays an essential role in assisting protein folding. The GroEL-GroES system forms a nano-cage that allows encapsulation of the non-native substrate proteins and provides a physical environment optimized to promote and accelerate protein folding. The chain is Chaperonin GroEL 1 from Anaeromyxobacter sp. (strain Fw109-5).